We begin with the raw amino-acid sequence, 422 residues long: Histidine--tRNA ligase (422 aa).

This sequence belongs to the class-II aminoacyl-tRNA synthetase family. In terms of assembly, homodimer.

Its subcellular location is the cytoplasm. It catalyses the reaction tRNA(His) + L-histidine + ATP = L-histidyl-tRNA(His) + AMP + diphosphate + H(+). The protein is Histidine--tRNA ligase of Prosthecochloris aestuarii (strain DSM 271 / SK 413).